The sequence spans 212 residues: 3-demethoxyubiquinol 3-hydroxylase (212 aa).

6 residues coordinate Fe cation: glutamate 61, glutamate 91, histidine 94, glutamate 143, glutamate 175, and histidine 178.

Belongs to the COQ7 family. Fe cation serves as cofactor.

It is found in the cell membrane. The catalysed reaction is a 5-methoxy-2-methyl-3-(all-trans-polyprenyl)benzene-1,4-diol + AH2 + O2 = a 3-demethylubiquinol + A + H2O. It functions in the pathway cofactor biosynthesis; ubiquinone biosynthesis. Catalyzes the hydroxylation of 2-nonaprenyl-3-methyl-6-methoxy-1,4-benzoquinol during ubiquinone biosynthesis. The chain is 3-demethoxyubiquinol 3-hydroxylase from Paraburkholderia phytofirmans (strain DSM 17436 / LMG 22146 / PsJN) (Burkholderia phytofirmans).